Consider the following 1242-residue polypeptide: Structural polyprotein (1242 aa).

Positions 1–36 (MFPYPTLNYPPMAPVNPMAYRDPNPPRRRWRPFRPP) are necessary for nucleocapsid assembly and virus assembly. The disordered stretch occupies residues 1-104 (MFPYPTLNYP…KQKPGKRQRM (104 aa)). The segment at 37–70 (LAAQIEDLRRSIANLTFKQRAPNPPAGPPAKRKK) is host transcription inhibition. The Supraphysiological nuclear export signal motif lies at 44–51 (LRRSIANL). A compositionally biased stretch (basic residues) spans 66–104 (AKRKKPAPKPKPAAPKKKRQPPPAKKQKRKQKPGKRQRM). Positions 67 to 70 (KRKK) match the Nuclear localization signal motif. Residues 83–113 (KRQPPPAKKQKRKQKPGKRQRMCMKLESDKT) are binding to the viral RNA. Residues 98–112 (PGKRQRMCMKLESDK) are ribosome-binding. Serine 110 is subject to Phosphoserine. Residues 112 to 261 (KTFPIMLNGQ…KDTPEGSEPW (150 aa)) form the Peptidase S3 domain. Threonine 113 carries the post-translational modification Phosphothreonine. Active-site charge relay system residues include histidine 138, aspartate 160, and serine 212. A functions as an uncleaved signal peptide for the precursor of protein E3/E2 region spans residues 262–273 (SLTTVMCVLANI). Asparagine 272 is a glycosylation site (N-linked (GlcNAc...) asparagine; by host). Residues 325–688 (DLETHFTQYK…YYYNRYPMTT (364 aa)) lie on the Extracellular side of the membrane. A helical membrane pass occupies residues 689–709 (VIGLCTCVAIIMVSCVTSVWL). The Cytoplasmic portion of the chain corresponds to 710–744 (LCRTRNLCITPYRLAPNAQVPILLAVLCCVKPTRA). S-palmitoyl cysteine; by host attachment occurs at residues cysteine 717, cysteine 737, and cysteine 738. A transient transmembrane before p62-6K protein processing region spans residues 717–737 (CITPYRLAPNAQVPILLAVLC). The Extracellular segment spans residues 745 to 759 (DDTLQVLNYLWNNNQ). Transmembrane regions (helical) follow at residues 760-780 (NFFW…MRML) and 781-801 (RCLL…GAAA). Topologically, residues 802-1218 (YEHAAVMPNK…WSWLKVLVGS (417 aa)) are extracellular. Disulfide bonds link cysteine 850–cysteine 915, cysteine 863–cysteine 895, cysteine 864–cysteine 897, cysteine 869–cysteine 879, cysteine 1061–cysteine 1073, cysteine 1103–cysteine 1178, cysteine 1108–cysteine 1182, and cysteine 1130–cysteine 1172. An E1 fusion peptide loop region spans residues 885–902 (VYPFMWGGAYCFCDTENT). The chain crosses the membrane as a helical span at residues 1219-1239 (TSAFIVLGLIATAVVALVLFT). Over 1240–1242 (HRH) the chain is Cytoplasmic.

As to quaternary structure, part of a tetrameric complex composed of host CRM1, host importin alpha/beta dimer and the viral capsid; this complex blocks the receptor-mediated transport through the nuclear pore. Interacts with host phosphatase PPP1CA; this interaction dephosphorylates the capsid protein, which increases its ability to bind to the viral genome. Interacts with host karyopherin KPNA4; this interaction allows the nuclear import of the viral capsid protein. Interacts with spike glycoprotein E2. Interacts with host IRAK1; the interaction leads to inhibition of IRAK1-dependent signaling. In terms of assembly, the precursor of protein E3/E2 and E1 form a heterodimer shortly after synthesis. The precursor of protein E3/E2 and E1 form a heterodimer shortly after synthesis. Processing of the precursor of protein E3/E2 into E2 and E3 results in a heterodimer of the spike glycoproteins E2 and E1. Spike at virion surface are constituted of three E2-E1 heterodimers. After target cell attachment and endocytosis, E1 change conformation to form homotrimers. Interacts with 6K protein. As to quaternary structure, processing of the precursor of protein E3/E2 into E2 and E3 results in a heterodimer of the spike glycoproteins E2 and E1. Spike at virion surface are constituted of three E2-E1 heterodimers. Interacts with 6K protein. In terms of assembly, interacts with spike glycoprotein E1. Interacts with spike glycoprotein E2. Structural polyprotein: Specific enzymatic cleavages in vivo yield mature proteins. Capsid protein is auto-cleaved during polyprotein translation, unmasking a signal peptide at the N-terminus of the precursor of E3/E2. The remaining polyprotein is then targeted to the host endoplasmic reticulum, where host signal peptidase cleaves it into pE2, 6K and E1 proteins. pE2 is further processed to mature E3 and E2 by host furin in trans-Golgi vesicle. Post-translationally, phosphorylated on serine and threonine residues. In terms of processing, palmitoylated via thioester bonds. These palmitoylations may induce disruption of the C-terminus transmembrane. This would result in the reorientation of E2 C-terminus from lumenal to cytoplasmic side. N-glycosylated. Post-translationally, palmitoylated via thioester bonds.

Its subcellular location is the virion. The protein resides in the host cytoplasm. It is found in the host cell membrane. It localises to the host nucleus. The protein localises to the virion membrane. The catalysed reaction is Autocatalytic release of the core protein from the N-terminus of the togavirus structural polyprotein by hydrolysis of a -Trp-|-Ser- bond.. Forms an icosahedral capsid with a T=4 symmetry composed of 240 copies of the capsid protein surrounded by a lipid membrane through which penetrate 80 spikes composed of trimers of E1-E2 heterodimers. The capsid protein binds to the viral RNA genome at a site adjacent to a ribosome binding site for viral genome translation following genome release. Possesses a protease activity that results in its autocatalytic cleavage from the nascent structural protein. Following its self-cleavage, the capsid protein transiently associates with ribosomes, and within several minutes the protein binds to viral RNA and rapidly assembles into icosahedric core particles. The resulting nucleocapsid eventually associates with the cytoplasmic domain of the spike glycoprotein E2 at the cell membrane, leading to budding and formation of mature virions. In case of infection, new virions attach to target cells and after clathrin-mediated endocytosis their membrane fuses with the host endosomal membrane. This leads to the release of the nucleocapsid into the cytoplasm, followed by an uncoating event necessary for the genomic RNA to become accessible. The uncoating might be triggered by the interaction of capsid proteins with ribosomes. Binding of ribosomes would release the genomic RNA since the same region is genomic RNA-binding and ribosome-binding. Specifically inhibits interleukin-1 receptor-associated kinase 1/IRAK1-dependent signaling during viral entry, representing a means by which the alphaviruses may evade innate immune detection and activation prior to viral gene expression. Inhibits host transcription. Forms a tetrameric complex with XPO1/CRM1 and the nuclear import receptor importin. This complex blocks the central channel of host nuclear pores thereby inhibiting the receptor-mediated nuclear transport and thus the host mRNA and rRNA transcription. The inhibition of transcription is linked to a cytopathic effect on the host cell. Its function is as follows. Provides the signal sequence for the translocation of the precursor of protein E3/E2 to the host endoplasmic reticulum. Furin-cleaved E3 remains associated with spike glycoprotein E1 and mediates pH protection of the latter during the transport via the secretory pathway. After virion release from the host cell, the assembly protein E3 is gradually released in the extracellular space. In terms of biological role, plays a role in viral attachment to target host cell, by binding to the cell receptor. Synthesized as a p62 precursor which is processed by furin at the cell membrane just before virion budding, giving rise to E2-E1 heterodimer. The p62-E1 heterodimer is stable, whereas E2-E1 is unstable and dissociate at low pH. p62 is processed at the last step, presumably to avoid E1 fusion activation before its final export to cell surface. E2 C-terminus contains a transitory transmembrane that would be disrupted by palmitoylation, resulting in reorientation of the C-terminal tail from lumenal to cytoplasmic side. This step is critical since E2 C-terminus is involved in budding by interacting with capsid proteins. This release of E2 C-terminus in cytoplasm occurs lately in protein export, and precludes premature assembly of particles at the endoplasmic reticulum membrane. Functionally, constitutive membrane protein involved in virus glycoprotein processing, cell permeabilization, and the budding of viral particles. Disrupts the calcium homeostasis of the cell, probably at the endoplasmic reticulum level. This leads to cytoplasmic calcium elevation. Because of its lipophilic properties, the 6K protein is postulated to influence the selection of lipids that interact with the transmembrane domains of the glycoproteins, which, in turn, affects the deformability of the bilayer required for the extreme curvature that occurs as budding proceeds. Present in low amount in virions, about 3% compared to viral glycoproteins. Class II viral fusion protein. Fusion activity is inactive as long as E1 is bound to E2 in mature virion. After virus attachment to target cell and endocytosis, acidification of the endosome would induce dissociation of E1/E2 heterodimer and concomitant trimerization of the E1 subunits. This E1 trimer is fusion active, and promotes release of viral nucleocapsid in cytoplasm after endosome and viral membrane fusion. Efficient fusion requires the presence of cholesterol and sphingolipid in the target membrane. Fusion is optimal at levels of about 1 molecule of cholesterol per 2 molecules of phospholipids, and is specific for sterols containing a 3-beta-hydroxyl group. This chain is Structural polyprotein, found in Aedes (Human).